The sequence spans 331 residues: MAKMYYDKDADLNLLKNKKIAIIGFGSQGHAHALNLKDSGLDVVVGLYEGSKSKERAEKEGLRVYTVEEAAKVADIIMILIPDEKQAKVYKESIEKNLTEGKALAFAHGFNIHFKQIVPPKNVDVFMVAPKGPGHLVRRVYQEGKGVPNLVAVYQDYTGKAFDLALAYAKGIGGTRAGVIETTFKEETETDLFGEQAVLCGGVTELMKAGFETLVEAGYQPEIAYFECVHEMKLIVDLIYEGGFSYMRYSISDTAEFGDYMTGKRIITEETRKEMKKVLSEIQSGKFAKEWLLENQVGRPQYNAIKDKEANHLIEKVGKGLREMMAWIKKE.

Positions 2–182 (AKMYYDKDAD…GGTRAGVIET (181 aa)) constitute a KARI N-terminal Rossmann domain. Residues 25–28 (FGSQ), serine 51, serine 53, and 83–86 (DEKQ) contribute to the NADP(+) site. Histidine 108 is an active-site residue. Glycine 134 lines the NADP(+) pocket. A KARI C-terminal knotted domain is found at 183-328 (TFKEETETDL…KGLREMMAWI (146 aa)). Mg(2+) is bound by residues aspartate 191, glutamate 195, glutamate 227, and glutamate 231. Serine 252 contributes to the substrate binding site.

This sequence belongs to the ketol-acid reductoisomerase family. Requires Mg(2+) as cofactor.

It catalyses the reaction (2R)-2,3-dihydroxy-3-methylbutanoate + NADP(+) = (2S)-2-acetolactate + NADPH + H(+). The enzyme catalyses (2R,3R)-2,3-dihydroxy-3-methylpentanoate + NADP(+) = (S)-2-ethyl-2-hydroxy-3-oxobutanoate + NADPH + H(+). It participates in amino-acid biosynthesis; L-isoleucine biosynthesis; L-isoleucine from 2-oxobutanoate: step 2/4. Its pathway is amino-acid biosynthesis; L-valine biosynthesis; L-valine from pyruvate: step 2/4. In terms of biological role, involved in the biosynthesis of branched-chain amino acids (BCAA). Catalyzes an alkyl-migration followed by a ketol-acid reduction of (S)-2-acetolactate (S2AL) to yield (R)-2,3-dihydroxy-isovalerate. In the isomerase reaction, S2AL is rearranged via a Mg-dependent methyl migration to produce 3-hydroxy-3-methyl-2-ketobutyrate (HMKB). In the reductase reaction, this 2-ketoacid undergoes a metal-dependent reduction by NADPH to yield (R)-2,3-dihydroxy-isovalerate. The protein is Ketol-acid reductoisomerase (NADP(+)) of Thermoanaerobacter pseudethanolicus (strain ATCC 33223 / 39E) (Clostridium thermohydrosulfuricum).